The primary structure comprises 2924 residues: Zinc finger ZZ-type and EF-hand domain-containing protein 1 (2924 aa).

Positions 1 to 41 are disordered; the sequence is MGNAPSNSSEDEAAAAGGEGWSPHQDWAADSGTTPGPGPAA. Glycine 2 is lipidated: N-myristoyl glycine. Residues 28-41 show a composition bias toward low complexity; it reads AADSGTTPGPGPAA. Residues 111 to 146 form the EF-hand domain; sequence CSGEQFEEAFAQFDAEGDGTVDAENMLEALKNSSGA. Positions 226–405 constitute a DOC domain; sequence LVQKEKESPG…AIWYWSLLTS (180 aa). Phosphoserine is present on serine 240. Positions 1452-1470 are enriched in basic and acidic residues; the sequence is HLQPLDRRQRTSSVVEEHF. Residues 1452 to 1527 are disordered; the sequence is HLQPLDRRQR…STPTRRPPFT (76 aa). A compositionally biased stretch (low complexity) spans 1472 to 1485; the sequence is GSASPTEAATPAAG. A phosphoserine mark is found at serine 1475, serine 1488, and serine 1509. Residue threonine 1510 is modified to Phosphothreonine. A compositionally biased stretch (pro residues) spans 1514 to 1523; that stretch reads PSPPSTPTRR. Serine 1515 carries the phosphoserine modification. A phosphothreonine mark is found at threonine 1519 and threonine 1521. Serine 1535 and serine 1538 each carry phosphoserine. ZZ-type zinc fingers lie at residues 1776–1831 and 1825–1880; these read NVDI…FTCD and NMEF…MVTI. The Zn(2+) site is built by cysteine 1781, cysteine 1784, cysteine 1795, cysteine 1798, cysteine 1804, cysteine 1807, histidine 1817, histidine 1821, cysteine 1830, cysteine 1833, cysteine 1844, cysteine 1847, cysteine 1853, cysteine 1856, histidine 1866, and histidine 1870. Residues 2388–2418 form a disordered region; it reads DLELDERGDQEEELDRPVSSPGEAEQKKLDP. Serine 2407 carries the post-translational modification Phosphoserine. N6-acetyllysine is present on lysine 2630.

As to quaternary structure, interacts with KLF6 and KLF9. Interacts via (ZZ-type 2 zinc finger) with histone H3 trimethylated at 'Lys-4' (H3K4me3) and histone H3 acetylated at 'Lys-4' (H3K4ac).

Functionally, histone H3 reader which may act as a transcriptional coactivator for KLF6 and KLF9 transcription factors. This chain is Zinc finger ZZ-type and EF-hand domain-containing protein 1 (Zzef1), found in Mus musculus (Mouse).